The following is a 36-amino-acid chain: Putative DNA-binding protein inhibitor ID-2B (36 aa).

This is Putative DNA-binding protein inhibitor ID-2B (ID2B) from Homo sapiens (Human).